A 293-amino-acid chain; its full sequence is Phospholipid scramblase 2 (293 aa).

The segment at 1–39 (MDKQNVQMNPPHPGTNLTGPPGHIGYPGPQAGYAVPPPG) is disordered. The interval 1–66 (MDKQNVQMNP…GHPGAPTQVP (66 aa)) is proline-rich domain (PRD). Residues 1–270 (MDKQNVQMNP…IQFPLDLDVK (270 aa)) lie on the Cytoplasmic side of the membrane. Threonine 143 carries the post-translational modification Phosphothreonine; by PKC. S-palmitoyl cysteine attachment occurs at residues cysteine 166, cysteine 167, cysteine 170, and cysteine 171. Residues 271-287 (MKAVMLGACFLIDFMFF) traverse the membrane as a helical segment. Topologically, residues 288–293 (EMTRGE) are extracellular.

Belongs to the phospholipid scramblase family. Ca(2+) serves as cofactor.

The protein localises to the membrane. The enzyme catalyses a 1,2-diacyl-sn-glycero-3-phosphocholine(in) = a 1,2-diacyl-sn-glycero-3-phosphocholine(out). Its function is as follows. May catalyze calcium-induced ATP-independent rapid bidirectional and non-specific movement of phospholipids (lipid scrambling or lipid flip-flop) between the inner and outer leaflet of the plasma membrane. This is Phospholipid scramblase 2 from Bos taurus (Bovine).